Reading from the N-terminus, the 157-residue chain is Peptide methionine sulfoxide reductase MsrA (157 aa).

Cysteine 10 is a catalytic residue.

The protein belongs to the MsrA Met sulfoxide reductase family.

It carries out the reaction L-methionyl-[protein] + [thioredoxin]-disulfide + H2O = L-methionyl-(S)-S-oxide-[protein] + [thioredoxin]-dithiol. It catalyses the reaction [thioredoxin]-disulfide + L-methionine + H2O = L-methionine (S)-S-oxide + [thioredoxin]-dithiol. Has an important function as a repair enzyme for proteins that have been inactivated by oxidation. Catalyzes the reversible oxidation-reduction of methionine sulfoxide in proteins to methionine. The polypeptide is Peptide methionine sulfoxide reductase MsrA (Clostridium perfringens (strain SM101 / Type A)).